We begin with the raw amino-acid sequence, 489 residues long: Rhamnulokinase (489 aa).

13–17 (ASSGR) contacts ATP. Cys-68 and Cys-222 form a disulfide bridge. Substrate contacts are provided by residues Gly-83 and 236–238 (HDT). The active-site Proton acceptor is the Asp-237. ATP is bound at residue Thr-259. Asn-296 is a binding site for substrate. Residue Gln-304 participates in ATP binding. A disulfide bridge connects residues Cys-353 and Cys-370. Gly-402 contacts ATP. Cys-413 and Cys-417 are oxidised to a cystine.

It belongs to the rhamnulokinase family. Monomer. The cofactor is Mg(2+).

The catalysed reaction is L-rhamnulose + ATP = L-rhamnulose 1-phosphate + ADP + H(+). It participates in carbohydrate degradation; L-rhamnose degradation; glycerone phosphate from L-rhamnose: step 2/3. Functionally, involved in the catabolism of L-rhamnose (6-deoxy-L-mannose). Catalyzes the transfer of the gamma-phosphate group from ATP to the 1-hydroxyl group of L-rhamnulose to yield L-rhamnulose 1-phosphate. The protein is Rhamnulokinase of Escherichia coli O1:K1 / APEC.